We begin with the raw amino-acid sequence, 809 residues long: MNKNGGPPVANITTSSTTITSTTTTQAKSQLPSSLSVNNLHTTQGSTDQPTILGVTEPISTAPPSSIDFKLSTELENTLISFNLFESPEESRKREEILGKLNQIVREWAKQVSLKKGYPEQTASEVVAKIFTFGSYRLGVHGPGSDIDTLCVGPKHIMRSDFFDDLSDILKVHPEITEFTTVKDAFVPVITMVFSGIPIDLIYAKLALTAIPEELNDLIDESFLKNIDEKSILSLNGCRVTDQILKLVPNIPNFRMALRCIKLWAIRRGIYSNILGFLGGVSWALLTARICQLYPNSAPSTIIHRFFKVYEIWKWPAPILLCHIQEGGILGPKVWNPKRDKAHLMPIITPAYPSMNSTYNVSKSTLQLMKSEFVRGAEITRKIETGECTWKNLLEKCDFFTRYSFYIEIDCYSMNEEDSRKWEGWIESKLRFLISNLESTPKMKFAVPYPKGFTNNLHKANNPDQICTSFFMGLSFNFSNTPGADKSVDLTKAVTEFTGIIKDWLRTQPNPDTMDIKVQYIKKKQLPAFVKDEGPEEPVKTTKKRSSTGEPSATRKKLKSENSDNKLNSPKSPITTNINSTPTTSTPTTTANTTTNTTTATTTTTTTTVPITSTPTSNISSPTMNSTELTTPTSTSTTTSNDSITTPPTTTTINSVQPPSAQPTENGSSTSNSPTSTSINNTALPPNPTTNSESTIETTITLPTTLESQTSTLKDSNEISTNGTAVATEPTITSPSVNINESSTSTSTTTTTTVTEQQIQTAPTTATPINKTIVNTMEVNELSFISSSSETSQSKPPPKKPTISIIRGN.

Positions Met1 to Pro50 are disordered. The span at Ile12–Thr25 shows a compositional bias: low complexity. The span at Gln26–Pro50 shows a compositional bias: polar residues. ATP contacts are provided by residues Phe133–Ser135, Asp146–Asp148, Asp200, Lys262, Tyr271, and Gly280–Val281. Residues Asp146, Asp148, and Asp200 each coordinate Mg(2+). 2 disordered regions span residues Phe529–Gln760 and Ile785–Asn809. The segment covering Val530–Lys540 has biased composition (basic and acidic residues). A compositionally biased stretch (low complexity) spans Ser572–Ser655. The segment covering Val656–Glu665 has biased composition (polar residues). The segment covering Asn666–Leu706 has biased composition (low complexity). Over residues Glu707–Pro735 the composition is skewed to polar residues. 2 stretches are compositionally biased toward low complexity: residues Ser736–Gln760 and Ile785–Ser794.

Belongs to the poly(A) polymerase family. Mg(2+) is required as a cofactor. It depends on Mn(2+) as a cofactor.

Its subcellular location is the nucleus. It carries out the reaction RNA(n) + ATP = RNA(n)-3'-adenine ribonucleotide + diphosphate. In terms of biological role, polymerase that creates the 3'-poly(A) tail of mRNA's. May acquire specificity through interaction with a cleavage and polyadenylation factor. The polypeptide is Poly(A) polymerase (papA) (Dictyostelium discoideum (Social amoeba)).